A 194-amino-acid chain; its full sequence is Probable RNA polymerase sigma factor HI_1459 (194 aa).

A Polymerase core binding motif is present at residues 45 to 58 (DLVQEAFLSAFKNL). A DNA-binding region (H-T-H motif) is located at residues 161 to 180 (SEEICQETHLTSSNLHTTLY).

Belongs to the sigma-70 factor family. ECF subfamily.

The sequence is that of Probable RNA polymerase sigma factor HI_1459 from Haemophilus influenzae (strain ATCC 51907 / DSM 11121 / KW20 / Rd).